The following is a 402-amino-acid chain: CinA-like protein (402 aa).

Belongs to the CinA family.

This chain is CinA-like protein, found in Escherichia coli O17:K52:H18 (strain UMN026 / ExPEC).